The following is a 715-amino-acid chain: MFEKLSQAACSEPFAFLGPFIDPTQGALRVWMPGATGVALVLEGQPRIALEREKESAFILKADLNLHLTHYQLAIDWNGVEQLVDDPYQYHGIYAEYDDLHTPKTMYQHMGSQFMTLERDGKSISGIRFLVYAPHATAVSLVGSFNDWDGRRHPMQRLDYGIWGLFIPDLAEGVSYKFEMKGPKGEGLPHKADPWGFYAEQYPSFASVTYDHARYQWQDAQWQTRPVTEKRKEALSFYELHAGSWKRNEQGEFLNYRELAAELVPYLVDMGYTHVELMPVSEHPFYGSWGYQPVGLFAPTSRYGSPDDFKFFVDACHQAGIGVVLDWVPAHFPSDDHGLANFDGTPLFHDPDPRRGWHQDWNSFIYDLGREQVRRFLVSNALYWFEQFHIDGIRVDAVASMLYLDYSRSHGQWIPNMDGGNENYDAIATLKWMNEEVYKYFPNAMTIAEESTAFPGVSAPTFMGGLGFGFKWNMGWMHDSLSYIKEEPVHRKYHHNTLTFPLVYAHSENYVLSLSHDEVVYGKGSIHNKMPGDEWQQTANLRAYFGYMYGQPGKKLNFMGAEIGQTAEWNHDDQLQWFLLDFPRHQGVQALTRDLNHLYRNQAALHDQDCIPAGFEWRLQDAAEQSIIAHERISEAGERILVVSNFTPVPRDEFRLGVPNKGRYQLLLNTDDSKYAGSGYEVVVDAKSEAVVSEDLAQSIVLRLPPLSTLFYKLV.

Residue D396 is the Nucleophile of the active site. E449 functions as the Proton donor in the catalytic mechanism.

The protein belongs to the glycosyl hydrolase 13 family. GlgB subfamily. As to quaternary structure, monomer.

It catalyses the reaction Transfers a segment of a (1-&gt;4)-alpha-D-glucan chain to a primary hydroxy group in a similar glucan chain.. It functions in the pathway glycan biosynthesis; glycogen biosynthesis. Its function is as follows. Catalyzes the formation of the alpha-1,6-glucosidic linkages in glycogen by scission of a 1,4-alpha-linked oligosaccharide from growing alpha-1,4-glucan chains and the subsequent attachment of the oligosaccharide to the alpha-1,6 position. This Vibrio vulnificus (strain CMCP6) protein is 1,4-alpha-glucan branching enzyme GlgB.